Reading from the N-terminus, the 249-residue chain is 23S rRNA (guanosine-2'-O-)-methyltransferase RlmB (249 aa).

Positions 200, 220, and 229 each coordinate S-adenosyl-L-methionine.

The protein belongs to the class IV-like SAM-binding methyltransferase superfamily. RNA methyltransferase TrmH family. RlmB subfamily.

The protein localises to the cytoplasm. The catalysed reaction is guanosine(2251) in 23S rRNA + S-adenosyl-L-methionine = 2'-O-methylguanosine(2251) in 23S rRNA + S-adenosyl-L-homocysteine + H(+). In terms of biological role, specifically methylates the ribose of guanosine 2251 in 23S rRNA. The chain is 23S rRNA (guanosine-2'-O-)-methyltransferase RlmB from Xylella fastidiosa (strain Temecula1 / ATCC 700964).